The following is a 388-amino-acid chain: Succinyl-diaminopimelate desuccinylase (388 aa).

His84 lines the Zn(2+) pocket. Residue Asp86 is part of the active site. Asp115 contacts Zn(2+). The active-site Proton acceptor is Glu146. Positions 147, 175, and 360 each coordinate Zn(2+).

Belongs to the peptidase M20A family. DapE subfamily. As to quaternary structure, homodimer. The cofactor is Zn(2+). It depends on Co(2+) as a cofactor.

The enzyme catalyses N-succinyl-(2S,6S)-2,6-diaminopimelate + H2O = (2S,6S)-2,6-diaminopimelate + succinate. It functions in the pathway amino-acid biosynthesis; L-lysine biosynthesis via DAP pathway; LL-2,6-diaminopimelate from (S)-tetrahydrodipicolinate (succinylase route): step 3/3. Functionally, catalyzes the hydrolysis of N-succinyl-L,L-diaminopimelic acid (SDAP), forming succinate and LL-2,6-diaminopimelate (DAP), an intermediate involved in the bacterial biosynthesis of lysine and meso-diaminopimelic acid, an essential component of bacterial cell walls. The protein is Succinyl-diaminopimelate desuccinylase of Helicobacter pylori (strain J99 / ATCC 700824) (Campylobacter pylori J99).